The chain runs to 178 residues: Oligoribonuclease (178 aa).

One can recognise an Exonuclease domain in the interval 7–168 (LIWIDLEMTG…DDIRESIAEL (162 aa)). Residue Tyr-128 is part of the active site.

Belongs to the oligoribonuclease family.

It is found in the cytoplasm. 3'-to-5' exoribonuclease specific for small oligoribonucleotides. The chain is Oligoribonuclease from Francisella tularensis subsp. tularensis (strain FSC 198).